We begin with the raw amino-acid sequence, 71 residues long: Small ribosomal subunit protein eS31 (71 aa).

Cysteine 35, cysteine 38, cysteine 53, and cysteine 56 together coordinate Zn(2+). The C4-type zinc-finger motif lies at 35-56 (CPKCGAGVFMAEHLNRYACGKC).

Belongs to the eukaryotic ribosomal protein eS31 family. As to quaternary structure, part of the 30S ribosomal subunit. The cofactor is Zn(2+).

The protein is Small ribosomal subunit protein eS31 of Methanococcus vannielii (strain ATCC 35089 / DSM 1224 / JCM 13029 / OCM 148 / SB).